Consider the following 269-residue polypeptide: Cyclic AMP-dependent transcription factor ATF-1 (269 aa).

Residues 1–90 (MEDSHKSNTT…GEGENPSISA (90 aa)) are disordered. Polar residues predominate over residues 9-18 (TTETASQPGS). The region spanning 31–90 (QVSSLSESEESQDSSDSIGSSQKAHGILARRPSYRKILKDLSSEDTRGRKGEGENPSISA) is the KID domain. Ser-63 is subject to Phosphoserine; by CaMK1, CDK3, RPS6KA4 and RPS6KA5. Residues 67-83 (ILKDLSSEDTRGRKGEG) show a composition bias toward basic and acidic residues. At Ser-196 the chain carries Phosphoserine; by HIPK2. Lys-206 is covalently cross-linked (Glycyl lysine isopeptide (Lys-Gly) (interchain with G-Cter in SUMO2)). The bZIP domain occupies 211–269 (QLRREIRLMKNREAARECRRKKKEYVKCLENRVAVLENQNKTLIEELKTLKDLYSHKSV). The segment at 213-237 (RREIRLMKNREAARECRRKKKEYVK) is basic motif. Residues 239-260 (LENRVAVLENQNKTLIEELKTL) are leucine-zipper.

This sequence belongs to the bZIP family. ATF subfamily. As to quaternary structure, binds DNA as a dimer. Interacts with HIPK2 and CDK3. Interacts with MOTS-c, a peptide produced by the mitochondrially encoded 12S rRNA MT-RNR1; the interaction occurs in the nucleus following metabolic stress. Post-translationally, phosphorylated at Ser-196 by HIPK2 in response to genotoxic stress. This phosphorylation promotes transcription repression of FTH1 and other antioxidant detoxification genes. The CDK3-mediated phosphorylation at Ser-63 promotes its transactivation and transcriptional activities. Phosphorylated at Ser-63 by RPS6KA4 and RPS6KA5 in response to mitogenic or stress stimuli.

It localises to the nucleus. Its function is as follows. Binds the cAMP response element (CRE) (consensus: 5'-GTGACGT[AC][AG]-3'), a sequence present in many viral and cellular promoters. Binds to the Tax-responsive element (TRE) of HTLV-I. Mediates PKA-induced stimulation of CRE-reporter genes. Represses the expression of FTH1 and other antioxidant detoxification genes. Triggers cell proliferation and transformation. The chain is Cyclic AMP-dependent transcription factor ATF-1 (Atf1) from Mus musculus (Mouse).